The following is a 237-amino-acid chain: Pyridoxine 5'-phosphate synthase (237 aa).

3-amino-2-oxopropyl phosphate-binding residues include N7 and R18. H43 acts as the Proton acceptor in catalysis. Residues R45 and H50 each contribute to the 1-deoxy-D-xylulose 5-phosphate site. The active-site Proton acceptor is the E70. T100 contacts 1-deoxy-D-xylulose 5-phosphate. H190 functions as the Proton donor in the catalytic mechanism. 3-amino-2-oxopropyl phosphate-binding positions include D191 and 213 to 214; that span reads GH.

It belongs to the PNP synthase family. Homooctamer; tetramer of dimers.

It localises to the cytoplasm. The catalysed reaction is 3-amino-2-oxopropyl phosphate + 1-deoxy-D-xylulose 5-phosphate = pyridoxine 5'-phosphate + phosphate + 2 H2O + H(+). It participates in cofactor biosynthesis; pyridoxine 5'-phosphate biosynthesis; pyridoxine 5'-phosphate from D-erythrose 4-phosphate: step 5/5. Functionally, catalyzes the complicated ring closure reaction between the two acyclic compounds 1-deoxy-D-xylulose-5-phosphate (DXP) and 3-amino-2-oxopropyl phosphate (1-amino-acetone-3-phosphate or AAP) to form pyridoxine 5'-phosphate (PNP) and inorganic phosphate. The protein is Pyridoxine 5'-phosphate synthase of Flavobacterium johnsoniae (strain ATCC 17061 / DSM 2064 / JCM 8514 / BCRC 14874 / CCUG 350202 / NBRC 14942 / NCIMB 11054 / UW101) (Cytophaga johnsonae).